Consider the following 819-residue polypeptide: MLLNSTRTLLLTYGRLLFAPGREGRQSRLAKGVSAWTVAAEGEKGGQLSPAPESTSCCGAAEVNEIKERDTKTCRQASSAGHNDLGLQEKEKSSGDESAFSSLGLNEEKRRALTLVLDGAPLFIGGGAGVGKSYMIQSIVTALRAKDLDVVVTASTGIAALNIGGSTFHSTFGVRVTSVGNSETNESCAVSILRYSKSLLAKVDVIVVDEVSLLHARHLEGLDIAARGAPGRIPHLPFGGIQVILCGDFMQLMHSTENCTSQDGGGDAGNKIGYRGDETTENTAGQNRSDVSSTAAVTDQGHIMSAVKNICVGERQRTSSGLIFESPLFLTCLLHLQLCEVKRHGDTAFLNDLNKLRQGVLTRRMMRSALVNPEDPNAIQLYPTRRSVAAFNESKMLELDGEEHLFRSIVESAGLSGPKGHASPNSRGANNVDGCNDVVVLHFLEKMRSSRRWQREVKKFVGQICTRCGISGIATSVVAPPYSSRQPYLKVYVHFCVSKQYDCLYPVAKMKAEWERSYYGTTPESKSARRFFGRVLFEVKHKNSLSTFLRASLKQAYSKVIESDNVLQSKRLKVGCRVILLRNLSNEYVNGSTGTVIGFQPVNKSRHLFPKGIRTQLSRKVYASLSRRPVVSSDSSAGSSENSYGGNGKEQALDVVNYDDVIVPIVRMDADGKDVAIPWLSLPLPDLQDRVFCTARVVTMPLVPAYAFTVHKTQGLTLDHSILLDCKGFFPCNHIIYVAASRVKKFSQLRMINVSPRMVTVHPGALHFSSSLPNVAEAETKWKKWKELQRMVNNGKALSASNPSVLELALYCATWKHHK.

The N-terminal 84 residues, 1-84, are a transit peptide targeting the mitochondrion; sequence MLLNSTRTLL…RQASSAGHND (84 aa). Residues 76 to 101 form a disordered region; that stretch reads QASSAGHNDLGLQEKEKSSGDESAFS. Position 126–133 (126–133) interacts with ATP; sequence GGAGVGKS. A DNA-binding region spans residues 734–754; sequence HIIYVAASRVKKFSQLRMINV.

Belongs to the helicase family. PIF1 subfamily. In terms of assembly, monomer. Requires Mg(2+) as cofactor.

The protein resides in the mitochondrion matrix. Its subcellular location is the kinetoplast. It catalyses the reaction Couples ATP hydrolysis with the unwinding of duplex DNA at the replication fork by translocating in the 5'-3' direction. This creates two antiparallel DNA single strands (ssDNA). The leading ssDNA polymer is the template for DNA polymerase III holoenzyme which synthesizes a continuous strand.. It carries out the reaction ATP + H2O = ADP + phosphate + H(+). Its function is as follows. DNA-dependent ATPase and 5'-3' DNA helicase required for the maintenance of mitochondrial (kinetoplast) genome stability. The protein is ATP-dependent DNA helicase PIF4 of Trypanosoma brucei brucei (strain 927/4 GUTat10.1).